The primary structure comprises 395 residues: Forkhead box protein I3 (395 aa).

The segment at residues 131 to 225 (RPPYSYSALI…DNGNFRRKRK (95 aa)) is a DNA-binding region (fork-head). 2 disordered regions span residues 216–288 (DNGN…GIIS) and 322–370 (RNFS…SSGS). A Nuclear localization signal motif is present at residues 221-227 (RRKRKRR). Low complexity predominate over residues 234–245 (ATTAAASSLGGL). Over residues 325–335 (SAGQLSGGTFT) the composition is skewed to polar residues. A compositionally biased stretch (low complexity) spans 336–349 (PSSSSSQEVPSPEQ).

As to expression, initially expressed in the pre-placodal ectoderm surrounding the neural plate, which will give rise to all craniofacial sensory organs. Expression then becomes restricted to a region immediately anterior to the first pair of somites that will give rise to the otic and epibranchial placodes, before becoming down-regulated from this region and restricted to the ectoderm and endoderm of the pharyngeal arches.

The protein localises to the nucleus. In terms of biological role, transcription factor required for pharyngeal arch development, which is involved in otic placode development. In Gallus gallus (Chicken), this protein is Forkhead box protein I3.